The sequence spans 141 residues: Large ribosomal subunit protein bL21 (141 aa).

The interval 111-141 (ATAPSRTEAAPESNPEAAPSAAATGIPADEE) is disordered. Low complexity predominate over residues 118–133 (EAAPESNPEAAPSAAA).

Belongs to the bacterial ribosomal protein bL21 family. In terms of assembly, part of the 50S ribosomal subunit. Contacts protein L20.

This protein binds to 23S rRNA in the presence of protein L20. The chain is Large ribosomal subunit protein bL21 from Synechococcus sp. (strain JA-2-3B'a(2-13)) (Cyanobacteria bacterium Yellowstone B-Prime).